Consider the following 323-residue polypeptide: tRNA U34 carboxymethyltransferase (323 aa).

Residues Lys-91, Trp-105, Lys-110, Gly-130, 152 to 154 (DPT), 181 to 182 (IE), Met-196, Tyr-200, and Arg-315 contribute to the carboxy-S-adenosyl-L-methionine site.

It belongs to the class I-like SAM-binding methyltransferase superfamily. CmoB family. In terms of assembly, homotetramer.

The catalysed reaction is carboxy-S-adenosyl-L-methionine + 5-hydroxyuridine(34) in tRNA = 5-carboxymethoxyuridine(34) in tRNA + S-adenosyl-L-homocysteine + H(+). Catalyzes carboxymethyl transfer from carboxy-S-adenosyl-L-methionine (Cx-SAM) to 5-hydroxyuridine (ho5U) to form 5-carboxymethoxyuridine (cmo5U) at position 34 in tRNAs. The protein is tRNA U34 carboxymethyltransferase of Salmonella enteritidis PT4 (strain P125109).